Reading from the N-terminus, the 734-residue chain is Tripartite terminase subunit 3 (734 aa).

Positions 183–189 (PKKRAKV) match the Nuclear localization signal motif. The Walker A motif signature appears at 258-265 (VPRRHGKT). Residues 352–357 (LLFVDE) carry the Walker B motif motif. Glu-357 functions as the For ATPase activity in the catalytic mechanism. Residues Asp-509, Glu-581, and Asp-706 each act as for nuclease activity in the active site.

The protein belongs to the herpesviridae TRM3 protein family. In terms of assembly, interacts with the terminase subunits TRM1 and TRM2. Interacts with portal protein.

It is found in the host nucleus. Its function is as follows. Component of the molecular motor that translocates viral genomic DNA in empty capsid during DNA packaging. Forms a tripartite terminase complex together with TRM1 and TRM2 in the host cytoplasm. Once the complex reaches the host nucleus, it interacts with the capsid portal vertex. This portal forms a ring in which genomic DNA is translocated into the capsid. TRM3 carries an RNase H-like nuclease activity that plays an important role for the cleavage of concatemeric viral DNA into unit length genomes. The polypeptide is Tripartite terminase subunit 3 (Human herpesvirus 2 (strain HG52) (HHV-2)).